A 435-amino-acid chain; its full sequence is D-inositol 3-phosphate glycosyltransferase (435 aa).

His16 is a binding site for 1D-myo-inositol 3-phosphate. UDP-N-acetyl-alpha-D-glucosamine is bound by residues Gln22–Pro23 and Gly30. Residues Asp27–Asn32, Lys85, Tyr118, Thr142, and Arg162 contribute to the 1D-myo-inositol 3-phosphate site. UDP-N-acetyl-alpha-D-glucosamine contacts are provided by Arg237, Lys242, and Val303. Mg(2+)-binding residues include Tyr312, Arg313, and Ala315. The UDP-N-acetyl-alpha-D-glucosamine site is built by Glu325 and Glu333. Residue Thr339 coordinates Mg(2+).

The protein belongs to the glycosyltransferase group 1 family. MshA subfamily. As to quaternary structure, homodimer.

The enzyme catalyses 1D-myo-inositol 3-phosphate + UDP-N-acetyl-alpha-D-glucosamine = 1D-myo-inositol 2-acetamido-2-deoxy-alpha-D-glucopyranoside 3-phosphate + UDP + H(+). Catalyzes the transfer of a N-acetyl-glucosamine moiety to 1D-myo-inositol 3-phosphate to produce 1D-myo-inositol 2-acetamido-2-deoxy-glucopyranoside 3-phosphate in the mycothiol biosynthesis pathway. This is D-inositol 3-phosphate glycosyltransferase from Kineococcus radiotolerans (strain ATCC BAA-149 / DSM 14245 / SRS30216).